Reading from the N-terminus, the 317-residue chain is Protein-L-isoaspartate O-methyltransferase (317 aa).

Ser-59 is a catalytic residue.

It belongs to the methyltransferase superfamily. L-isoaspartyl/D-aspartyl protein methyltransferase family. As to quaternary structure, monomer.

The protein localises to the cytoplasm. The catalysed reaction is [protein]-L-isoaspartate + S-adenosyl-L-methionine = [protein]-L-isoaspartate alpha-methyl ester + S-adenosyl-L-homocysteine. In terms of biological role, catalyzes the methyl esterification of L-isoaspartyl residues in peptides and proteins that result from spontaneous decomposition of normal L-aspartyl and L-asparaginyl residues. It plays a role in the repair and/or degradation of damaged proteins. The chain is Protein-L-isoaspartate O-methyltransferase (pcm) from Thermotoga maritima (strain ATCC 43589 / DSM 3109 / JCM 10099 / NBRC 100826 / MSB8).